We begin with the raw amino-acid sequence, 131 residues long: MRRITCCFPIKIHRRQPPSPPSTITLSSYEYSSLAVGIISDLKEEGCDTLLVKLQKDANRKIGMGVGVRDRGILITTVVPGSVAAEKLKVGDRILAVNGRPILDQRSVVKSVKASGQRLYLQIARPHKVHK.

The 77-residue stretch at Leu51–His127 folds into the PDZ domain.

The chain is PDZ domain-containing protein C52A11.3 from Caenorhabditis elegans.